A 382-amino-acid chain; its full sequence is Cholinephosphotransferase 1 (382 aa).

Over 1-51 (MPQCECPEPLSAVQLKRLEEHKYSAAGRSLFEPPCQIYWNWLVQQIPTWVA) the chain is Cytoplasmic. A helical transmembrane segment spans residues 52–72 (PNTLTTIGLVINVITTVILVY). Position 53 (Asn-53) interacts with CDP-choline. Over 73 to 82 (YSPTATEEVP) the chain is Lumenal. Residues 83–107 (GWAFFLSALGLFIYQSLDAIDGKQA) traverse the membrane as a helical segment. Mg(2+) is bound by residues Asp-100 and Asp-103. CDP-choline is bound at residue Arg-108. Over 108 to 114 (RRTNSSS) the chain is Cytoplasmic. The chain crosses the membrane as a helical span at residues 115–139 (ALGELFDHGCDAVSTVFVAVGTCIC). Asp-121 serves as a coordination point for Mg(2+). Residue His-122 is the Proton acceptor of the active site. Asp-125 contacts Mg(2+). Residues 140 to 149 (CGIGAYPNWM) are Lumenal-facing. A helical membrane pass occupies residues 150–168 (FFCGFVGMFMFFCAHWQTY). Topologically, residues 169-179 (VSGTLRFGLVD) are cytoplasmic. The chain crosses the membrane as a helical span at residues 180–196 (VTEVQIAIIIMYLLTAF). Residues 197–211 (TGVSFWEMRVPVLGV) are Lumenal-facing. The helical transmembrane segment at 212–237 (NLQTFPILGIIGGFLYSTYNYFFVIM) threads the bilayer. The Cytoplasmic portion of the chain corresponds to 238–254 (NGGVGKNGSTVADTSVL). The chain crosses the membrane as a helical span at residues 255–270 (TPGLHIGLILTLAFII). At 271–282 (FKKSSSHLFEHH) the chain is on the lumenal side. The chain crosses the membrane as a helical span at residues 283 to 305 (PCLYVLTFGMVIAKISNKLVVAH). Over 306-318 (MTKSELHLQDTAF) the chain is Cytoplasmic. A helical membrane pass occupies residues 319–328 (IGPGLLFLNQ). Topologically, residues 329–335 (YFNSYID) are lumenal. Residues 336–365 (EHIVLWIAMVLSLVDLVRYCTAVCLQIASH) form a helical membrane-spanning segment. At 366–382 (LRIRVFSISPQGHAHKD) the chain is on the cytoplasmic side.

This sequence belongs to the CDP-alcohol phosphatidyltransferase class-I family. The cofactor is Mg(2+). Mn(2+) is required as a cofactor.

Its subcellular location is the golgi apparatus membrane. It catalyses the reaction CDP-choline + a 1,2-diacyl-sn-glycerol = a 1,2-diacyl-sn-glycero-3-phosphocholine + CMP + H(+). It carries out the reaction 1-octadecanoyl-2-(5Z,8Z,11Z,14Z-eicosatetraenoyl)-sn-glycerol + CDP-choline = 1-octadecanoyl-2-(5Z,8Z,11Z,14Z-eicosatetraenoyl)-sn-glycero-3-phosphocholine + CMP + H(+). The catalysed reaction is 1-hexadecanoyl-2-(9Z-octadecenoyl)-sn-glycerol + CDP-choline = 1-hexadecanoyl-2-(9Z-octadecenoyl)-sn-glycero-3-phosphocholine + CMP + H(+). The enzyme catalyses 1-hexadecanoyl-2-(4Z,7Z,10Z,13Z,16Z,19Z-docosahexaenoyl)-sn-glycerol + CDP-choline = 1-hexadecanoyl-2-(4Z,7Z,10Z,13Z,16Z,19Z-docosahexaenoyl)-sn-glycero-3-phosphocholine + CMP + H(+). It catalyses the reaction 1,2-dioctanoyl-sn-glycerol + CDP-choline = 1,2-dioctanoyl-sn-glycero-3-phosphocholine + CMP + H(+). The protein operates within phospholipid metabolism; phosphatidylcholine biosynthesis; phosphatidylcholine from phosphocholine: step 2/2. Its function is as follows. Catalyzes the final step of de novo phosphatidylcholine (PC) synthesis, i.e. the transfer of choline phosphate from CDP-choline to the free hydroxyl of a diacylglycerol (DAG), producing a PC. It thereby plays a central role in the formation and maintenance of vesicular membranes. This is Cholinephosphotransferase 1 (chpt1) from Danio rerio (Zebrafish).